The following is a 240-amino-acid chain: Probable transcriptional regulatory protein A2cp1_1765 (240 aa).

Belongs to the TACO1 family.

The protein resides in the cytoplasm. This chain is Probable transcriptional regulatory protein A2cp1_1765, found in Anaeromyxobacter dehalogenans (strain 2CP-1 / ATCC BAA-258).